The primary structure comprises 437 residues: tRNA(Ile)-lysidine synthase (437 aa).

22-27 (SGGLDS) contributes to the ATP binding site.

This sequence belongs to the tRNA(Ile)-lysidine synthase family.

It is found in the cytoplasm. It catalyses the reaction cytidine(34) in tRNA(Ile2) + L-lysine + ATP = lysidine(34) in tRNA(Ile2) + AMP + diphosphate + H(+). In terms of biological role, ligates lysine onto the cytidine present at position 34 of the AUA codon-specific tRNA(Ile) that contains the anticodon CAU, in an ATP-dependent manner. Cytidine is converted to lysidine, thus changing the amino acid specificity of the tRNA from methionine to isoleucine. This Xylella fastidiosa (strain Temecula1 / ATCC 700964) protein is tRNA(Ile)-lysidine synthase.